Consider the following 193-residue polypeptide: Protein GrpE (193 aa).

The disordered stretch occupies residues Met1 to Met40. Residues Leu14–Thr25 show a composition bias toward polar residues.

This sequence belongs to the GrpE family. As to quaternary structure, homodimer.

The protein localises to the cytoplasm. Its function is as follows. Participates actively in the response to hyperosmotic and heat shock by preventing the aggregation of stress-denatured proteins, in association with DnaK and GrpE. It is the nucleotide exchange factor for DnaK and may function as a thermosensor. Unfolded proteins bind initially to DnaJ; upon interaction with the DnaJ-bound protein, DnaK hydrolyzes its bound ATP, resulting in the formation of a stable complex. GrpE releases ADP from DnaK; ATP binding to DnaK triggers the release of the substrate protein, thus completing the reaction cycle. Several rounds of ATP-dependent interactions between DnaJ, DnaK and GrpE are required for fully efficient folding. The polypeptide is Protein GrpE (Nitrosospira multiformis (strain ATCC 25196 / NCIMB 11849 / C 71)).